Reading from the N-terminus, the 309-residue chain is Ribosomal protein L11 methyltransferase (309 aa).

The S-adenosyl-L-methionine site is built by Thr160, Gly181, Asp203, and Asn245.

This sequence belongs to the methyltransferase superfamily. PrmA family.

It is found in the cytoplasm. It catalyses the reaction L-lysyl-[protein] + 3 S-adenosyl-L-methionine = N(6),N(6),N(6)-trimethyl-L-lysyl-[protein] + 3 S-adenosyl-L-homocysteine + 3 H(+). In terms of biological role, methylates ribosomal protein L11. The polypeptide is Ribosomal protein L11 methyltransferase (Caldanaerobacter subterraneus subsp. tengcongensis (strain DSM 15242 / JCM 11007 / NBRC 100824 / MB4) (Thermoanaerobacter tengcongensis)).